Reading from the N-terminus, the 583-residue chain is 2-succinyl-5-enolpyruvyl-6-hydroxy-3-cyclohexene-1-carboxylate synthase (583 aa).

Belongs to the TPP enzyme family. MenD subfamily. Homodimer. The cofactor is Mg(2+). It depends on Mn(2+) as a cofactor. Thiamine diphosphate is required as a cofactor.

The enzyme catalyses isochorismate + 2-oxoglutarate + H(+) = 5-enolpyruvoyl-6-hydroxy-2-succinyl-cyclohex-3-ene-1-carboxylate + CO2. It participates in quinol/quinone metabolism; 1,4-dihydroxy-2-naphthoate biosynthesis; 1,4-dihydroxy-2-naphthoate from chorismate: step 2/7. Its pathway is quinol/quinone metabolism; menaquinone biosynthesis. Its function is as follows. Catalyzes the thiamine diphosphate-dependent decarboxylation of 2-oxoglutarate and the subsequent addition of the resulting succinic semialdehyde-thiamine pyrophosphate anion to isochorismate to yield 2-succinyl-5-enolpyruvyl-6-hydroxy-3-cyclohexene-1-carboxylate (SEPHCHC). This chain is 2-succinyl-5-enolpyruvyl-6-hydroxy-3-cyclohexene-1-carboxylate synthase, found in Chlorobium luteolum (strain DSM 273 / BCRC 81028 / 2530) (Pelodictyon luteolum).